Here is a 270-residue protein sequence, read N- to C-terminus: Cerberus (270 aa).

The signal sequence occupies residues 1 to 20 (MLLNVLRICIIVCLVNDGAG). Asparagine 103, asparagine 112, and asparagine 154 each carry an N-linked (GlcNAc...) asparagine glycan. 4 disulfide bridges follow: cysteine 169–cysteine 215, cysteine 183–cysteine 229, cysteine 193–cysteine 245, and cysteine 197–cysteine 247. The 85-residue stretch at 169–253 (CKTLPFTQNI…ECTCEAHKSN (85 aa)) folds into the CTCK domain. An N-linked (GlcNAc...) asparagine glycan is attached at asparagine 228.

It belongs to the DAN family. In terms of assembly, the long chain interacts with nodal/nr-1, bmp4 and wnt8, thereby inhibiting their function. The short chain interacts with nodal/nr-1 but not bmp4 or wnt8. As to expression, a component of the Nieuwkoop signaling center in the blastula. Expressed transiently in a broad anterior domain of the gastrula, including the anterior endoderm of the Spemann's organizer and more laterally the cardiac primordia. Expression is excluded from the prospective prechordal plate region and the ring of cells that give rise to the trunk-tail mesoderm.

Its subcellular location is the secreted. Functionally, inhibits wnt, nodal/nr-1 and bmp signaling in the embryo to promote head formation and anterior neural induction. Within the endoderm, acts as an essential mediator of nodal/nr-1-induced cardiogenesis in the overlying mesoderm. The polypeptide is Cerberus (Xenopus laevis (African clawed frog)).